Reading from the N-terminus, the 473-residue chain is MKTLYSLRRFYPVETLFNGTLALAGRDQETTGFAWWAGNARLINLSGKLLGAHVAHAGLIVFWAGAMNLFEVAHFVPEKPMYEQGLILLPHLATLGWGVGPGGEVLDTFPYFVSGVLHLISSAVLGFGGIYHALLGPETLEESFPFFGYVWKDRNKMTTILGIHLILLGIGAFLLVFKALYFGGVYDTWAPGGGDVRKITNLTLSPSIVFGYLLKSPFGGEGWIVSVDDLEDIIGGHVWLGSICILGGIWHILTKPFAWARRALVWSGEAYLSYSLGALSIFGFVACCFVWFNNTAYPSEFYGPTGPEASQAQAFTFLVRDQRLGANVGSAQGPTGLGKYLMRSPTGEVIFGGETMRFWDLRAPWLEPLRGPNGLDLSRLKKDIQPWQERRSAEYMTHAPLGSLNSVGGVATEINAVNYVSPRSWLATSHFVLGFFLFVGHLWHAGRARAAAAGFEKGIDRDFEPVLSMTPLN.

Residues 1–14 (MKTLYSLRRFYPVE) constitute a propeptide that is removed on maturation. T15 carries the N-acetylthreonine modification. A Phosphothreonine modification is found at T15. 5 helical membrane-spanning segments follow: residues 69-93 (LFEV…PHLA), 134-155 (LLGP…KDRN), 178-200 (KALY…RKIT), 255-275 (KPFA…LSYS), and 291-312 (WFNN…ASQA). E367 serves as a coordination point for [CaMn4O5] cluster. Residues 447–471 (RARAAAAGFEKGIDRDFEPVLSMTP) form a helical membrane-spanning segment.

The protein belongs to the PsbB/PsbC family. PsbC subfamily. In terms of assembly, PSII is composed of 1 copy each of membrane proteins PsbA, PsbB, PsbC, PsbD, PsbE, PsbF, PsbH, PsbI, PsbJ, PsbK, PsbL, PsbM, PsbT, PsbX, PsbY, PsbZ, Psb30/Ycf12, at least 3 peripheral proteins of the oxygen-evolving complex and a large number of cofactors. It forms dimeric complexes. Binds multiple chlorophylls and provides some of the ligands for the Ca-4Mn-5O cluster of the oxygen-evolving complex. It may also provide a ligand for a Cl- that is required for oxygen evolution. PSII binds additional chlorophylls, carotenoids and specific lipids. is required as a cofactor.

The protein localises to the plastid. It localises to the chloroplast thylakoid membrane. Its function is as follows. One of the components of the core complex of photosystem II (PSII). It binds chlorophyll and helps catalyze the primary light-induced photochemical processes of PSII. PSII is a light-driven water:plastoquinone oxidoreductase, using light energy to abstract electrons from H(2)O, generating O(2) and a proton gradient subsequently used for ATP formation. The sequence is that of Photosystem II CP43 reaction center protein from Morus indica (Mulberry).